The chain runs to 217 residues: tRNA (guanine-N(7)-)-methyltransferase (217 aa).

Residues Glu43, Asp68, Asn101, and Asn123 each contribute to the S-adenosyl-L-methionine site. Lys127 contributes to the substrate binding site. The interval 129 to 134 (RHNKRR) is interaction with RNA. Substrate-binding positions include Asp159 and 196–199 (TEYE).

Belongs to the class I-like SAM-binding methyltransferase superfamily. TrmB family.

The catalysed reaction is guanosine(46) in tRNA + S-adenosyl-L-methionine = N(7)-methylguanosine(46) in tRNA + S-adenosyl-L-homocysteine. The protein operates within tRNA modification; N(7)-methylguanine-tRNA biosynthesis. Functionally, catalyzes the formation of N(7)-methylguanine at position 46 (m7G46) in tRNA. This is tRNA (guanine-N(7)-)-methyltransferase from Clostridium botulinum (strain Loch Maree / Type A3).